Reading from the N-terminus, the 159-residue chain is Mediator of RNA polymerase II transcription subunit 10 (159 aa).

Positions 54 to 77 are disordered; sequence STHTKPQPPSQDDEQKGSANDPLL.

Belongs to the Mediator complex subunit 10 family. In terms of assembly, component of the Mediator complex.

It localises to the nucleus. Functionally, component of the Mediator complex, a coactivator involved in the regulated transcription of nearly all RNA polymerase II-dependent genes. Mediator functions as a bridge to convey information from gene-specific regulatory proteins to the basal RNA polymerase II transcription machinery. Mediator is recruited to promoters by direct interactions with regulatory proteins and serves as a scaffold for the assembly of a functional preinitiation complex with RNA polymerase II and the general transcription factors. This is Mediator of RNA polymerase II transcription subunit 10 (nut2) from Aspergillus fumigatus (strain ATCC MYA-4609 / CBS 101355 / FGSC A1100 / Af293) (Neosartorya fumigata).